The chain runs to 265 residues: Small ribosomal subunit protein uS3 (265 aa).

A KH type-2 domain is found at 43–111; that stretch reads IRTMLKTSLD…QIQLNILEVK (69 aa). Positions 217–265 are disordered; the sequence is AREQANQKSSRPERRNDRSDGRTGDRRTNAPRTAPAAEAAPVAAAGVEA. Over residues 226–244 the composition is skewed to basic and acidic residues; it reads SRPERRNDRSDGRTGDRRT. Residues 250–265 show a composition bias toward low complexity; it reads APAAEAAPVAAAGVEA.

It belongs to the universal ribosomal protein uS3 family. In terms of assembly, part of the 30S ribosomal subunit. Forms a tight complex with proteins S10 and S14.

Its function is as follows. Binds the lower part of the 30S subunit head. Binds mRNA in the 70S ribosome, positioning it for translation. The protein is Small ribosomal subunit protein uS3 of Clavibacter michiganensis subsp. michiganensis (strain NCPPB 382).